Consider the following 410-residue polypeptide: Dipeptidase 1 (410 aa).

An N-terminal signal peptide occupies residues 1–16; the sequence is MWTGWWLWPLVAVCTA. Positions 36 and 38 each coordinate Zn(2+). 2 N-linked (GlcNAc...) asparagine glycosylation sites follow: Asn57 and Asn62. Cysteines 87 and 170 form a disulfide. Glu141 is a Zn(2+) binding site. His168 is a binding site for substrate. Zn(2+) contacts are provided by His214 and His235. A disulfide bridge connects residues Cys242 and Cys274. Arg246 lines the substrate pocket. N-linked (GlcNAc...) asparagine glycosylation is present at Asn279. Asp304 contacts substrate. The GPI-anchor amidated serine moiety is linked to residue Ser384. The propeptide at 385–410 is removed in mature form; it reads GAPSLHLQPGTLLASLVTLLLSLCLL.

Belongs to the metallo-dependent hydrolases superfamily. Peptidase M19 family. In terms of assembly, homodimer; disulfide-linked. It depends on Zn(2+) as a cofactor.

Its subcellular location is the apical cell membrane. The enzyme catalyses an L-aminoacyl-L-amino acid + H2O = 2 an L-alpha-amino acid. It catalyses the reaction leukotriene D4 + H2O = leukotriene E4 + glycine. The catalysed reaction is L-cystine-bis-glycine + 2 H2O = L-cystine + 2 glycine. It carries out the reaction a beta-lactam + H2O = a substituted beta-amino acid. The enzyme catalyses glycyldehydrophenylalanine + H2O = 2,3-didehydrophenylalanine + glycine. With respect to regulation, inhibited by L-penicillamine. Inhibited by cilastatin. Its function is as follows. Hydrolyzes a wide range of dipeptides including the conversion of leukotriene D4 to leukotriene E4. Hydrolyzes cystinyl-bis-glycine (cys-bis-gly) formed during glutathione degradation. Also possesses beta lactamase activity and hydrolytically inactivates beta-lactam antibiotics. Independently of its dipeptidase activity, acts as an adhesion receptor for neutrophil recruitment from bloodstream into inflamed lungs and liver. The sequence is that of Dipeptidase 1 (DPEP1) from Bos taurus (Bovine).